The sequence spans 690 residues: Protein arginine N-methyltransferase 7 (690 aa).

2 SAM-dependent MTase PRMT-type domains span residues 14-357 (ENSW…YSLW) and 366-690 (AKSV…QKKP).

Belongs to the class I-like SAM-binding methyltransferase superfamily. Protein arginine N-methyltransferase family. PRMT7 subfamily.

Essential arginine methyltransferase that can both catalyze the formation of omega-N monomethylarginine (MMA) and symmetrical dimethylarginine (sDMA). Specifically mediates the symmetrical dimethylation of arginine residues in the small nuclear ribonucleoproteins SmD1 and SmD3. This Drosophila ananassae (Fruit fly) protein is Protein arginine N-methyltransferase 7 (Art7).